The primary structure comprises 78 residues: Esculentin-2ISa (78 aa).

An N-terminal signal peptide occupies residues 1–22 (MFTLKKSLLLLFFLGTISLSVC). Residues 23–39 (KQERDADYEDKGEVEEV) constitute a propeptide, removed in mature form. Cysteines 72 and 78 form a disulfide.

In terms of tissue distribution, expressed by the skin glands.

Its subcellular location is the secreted. Functionally, has antimicrobial activity against Gram-negative bacterium E.coli ATCC 8739 (MIC=12.5 ug), against Gram positive bacteria S.aureus ATCC 6538 (MIC=3.1 ug), methicillin-resistant S.aureus ATCC 43300 (MIC=25 ug), B.subtilis ATCC 6633 (MIC=6.3 ug) and against fungus C.albicans ATCC 90028 (MIC=100 ug). This is Esculentin-2ISa from Odorrana ishikawae (Ishikawa's frog).